Here is a 79-residue protein sequence, read N- to C-terminus: Sulfur carrier protein TusA (79 aa).

Cysteine 16 functions as the Cysteine persulfide intermediate in the catalytic mechanism.

This sequence belongs to the sulfur carrier protein TusA family.

It is found in the cytoplasm. In terms of biological role, sulfur carrier protein which probably makes part of a sulfur-relay system. This Pseudomonas paraeruginosa (strain DSM 24068 / PA7) (Pseudomonas aeruginosa (strain PA7)) protein is Sulfur carrier protein TusA.